A 474-amino-acid chain; its full sequence is PRAME family member 7 (474 aa).

The stretch at 97–122 is one LRR 1; degenerate repeat; the sequence is QSKLQVLDLRNVDENFCDIFSGATAS. The stretch at 177 to 201 is one LRR 2; degenerate repeat; the sequence is HVCCKELQVFGMPIHSIIEVLNMVE. Residues 202-228 form an LRR 3; degenerate repeat; the sequence is LDCIQEVEVCCPWELSTLVKFAPYLGQ. The stretch at 229–264 is one LRR 4; degenerate repeat; sequence MRNLRKLVLFNIRASACIPPDNKGQFIARFTSQFLK. LRR repeat units follow at residues 265–290, 291–322, 323–341, 347–374, and 375–399; these read LDYFQNLSMHSVSFLEGHLDQLLRCL, QASLEMVVMTDCLLSESDLKHLSWCPSIRQLK, ELDLRGVTLTHFSPEPLTG, VATLQTLDLEDCGIMDSQLSAILPVLSR, and CSQLSTFSFCGNLISMAALENLLRH.

The protein belongs to the PRAME family.

This Homo sapiens (Human) protein is PRAME family member 7.